Consider the following 120-residue polypeptide: Large ribosomal subunit protein bL19 (120 aa).

Belongs to the bacterial ribosomal protein bL19 family.

This protein is located at the 30S-50S ribosomal subunit interface and may play a role in the structure and function of the aminoacyl-tRNA binding site. The chain is Large ribosomal subunit protein bL19 from Rippkaea orientalis (strain PCC 8801 / RF-1) (Cyanothece sp. (strain PCC 8801)).